We begin with the raw amino-acid sequence, 180 residues long: NAD(P)H-quinone oxidoreductase subunit I, chloroplastic (180 aa).

2 4Fe-4S ferredoxin-type domains span residues Gly-55–Arg-84 and Leu-95–Glu-124. [4Fe-4S] cluster is bound by residues Cys-64, Cys-67, Cys-70, Cys-74, Cys-104, Cys-107, Cys-110, and Cys-114.

It belongs to the complex I 23 kDa subunit family. In terms of assembly, NDH is composed of at least 16 different subunits, 5 of which are encoded in the nucleus. It depends on [4Fe-4S] cluster as a cofactor.

Its subcellular location is the plastid. It is found in the chloroplast thylakoid membrane. The catalysed reaction is a plastoquinone + NADH + (n+1) H(+)(in) = a plastoquinol + NAD(+) + n H(+)(out). It carries out the reaction a plastoquinone + NADPH + (n+1) H(+)(in) = a plastoquinol + NADP(+) + n H(+)(out). NDH shuttles electrons from NAD(P)H:plastoquinone, via FMN and iron-sulfur (Fe-S) centers, to quinones in the photosynthetic chain and possibly in a chloroplast respiratory chain. The immediate electron acceptor for the enzyme in this species is believed to be plastoquinone. Couples the redox reaction to proton translocation, and thus conserves the redox energy in a proton gradient. In Drimys granadensis, this protein is NAD(P)H-quinone oxidoreductase subunit I, chloroplastic.